Here is a 313-residue protein sequence, read N- to C-terminus: Ribosomal RNA small subunit methyltransferase H (313 aa).

S-adenosyl-L-methionine-binding positions include 34–36, aspartate 53, phenylalanine 80, aspartate 101, and glutamine 108; that span reads GGH.

This sequence belongs to the methyltransferase superfamily. RsmH family.

It localises to the cytoplasm. It catalyses the reaction cytidine(1402) in 16S rRNA + S-adenosyl-L-methionine = N(4)-methylcytidine(1402) in 16S rRNA + S-adenosyl-L-homocysteine + H(+). Its function is as follows. Specifically methylates the N4 position of cytidine in position 1402 (C1402) of 16S rRNA. This is Ribosomal RNA small subunit methyltransferase H from Lacticaseibacillus paracasei (strain ATCC 334 / BCRC 17002 / CCUG 31169 / CIP 107868 / KCTC 3260 / NRRL B-441) (Lactobacillus paracasei).